The chain runs to 558 residues: uncharacterized protein (558 aa).

Residues 338 to 354 are compositionally biased toward low complexity; it reads STSTSTSTSTSSSNDLN. The interval 338–380 is disordered; sequence STSTSTSTSTSSSNDLNLDSDSDDSDSDDSDSDSDSDSDSEID. The span at 355-380 shows a compositional bias: acidic residues; the sequence is LDSDSDDSDSDDSDSDSDSDSDSEID.

Its subcellular location is the plastid. This is an uncharacterized protein from Euglena longa (Euglenophycean alga).